Reading from the N-terminus, the 461-residue chain is Glyceraldehyde-3-phosphate dehydrogenase-like protein (461 aa).

Threonine 421 bears the Phosphothreonine mark.

It belongs to the glyceraldehyde-3-phosphate dehydrogenase family.

The protein is Glyceraldehyde-3-phosphate dehydrogenase-like protein (gap2) of Pseudomonas aeruginosa (strain UCBPP-PA14).